Here is a 352-residue protein sequence, read N- to C-terminus: N-acetyl-gamma-glutamyl-phosphate reductase (352 aa).

Cys155 is an active-site residue.

This sequence belongs to the NAGSA dehydrogenase family. Type 1 subfamily.

The protein localises to the cytoplasm. It carries out the reaction N-acetyl-L-glutamate 5-semialdehyde + phosphate + NADP(+) = N-acetyl-L-glutamyl 5-phosphate + NADPH + H(+). Its pathway is amino-acid biosynthesis; L-arginine biosynthesis; N(2)-acetyl-L-ornithine from L-glutamate: step 3/4. Catalyzes the NADPH-dependent reduction of N-acetyl-5-glutamyl phosphate to yield N-acetyl-L-glutamate 5-semialdehyde. This Acaryochloris marina (strain MBIC 11017) protein is N-acetyl-gamma-glutamyl-phosphate reductase.